The chain runs to 99 residues: Integration host factor subunit alpha (99 aa).

Belongs to the bacterial histone-like protein family. As to quaternary structure, heterodimer of an alpha and a beta chain.

This protein is one of the two subunits of integration host factor, a specific DNA-binding protein that functions in genetic recombination as well as in transcriptional and translational control. In Xylella fastidiosa (strain 9a5c), this protein is Integration host factor subunit alpha (ihfA).